The primary structure comprises 297 residues: Methionyl-tRNA formyltransferase (297 aa).

Residues 31–52 (QPPRAAGRGQKPRPSPVHRAAE) are disordered. 108–111 (SLLP) serves as a coordination point for (6S)-5,6,7,8-tetrahydrofolate.

This sequence belongs to the Fmt family.

It catalyses the reaction L-methionyl-tRNA(fMet) + (6R)-10-formyltetrahydrofolate = N-formyl-L-methionyl-tRNA(fMet) + (6S)-5,6,7,8-tetrahydrofolate + H(+). In terms of biological role, attaches a formyl group to the free amino group of methionyl-tRNA(fMet). The formyl group appears to play a dual role in the initiator identity of N-formylmethionyl-tRNA by promoting its recognition by IF2 and preventing the misappropriation of this tRNA by the elongation apparatus. In Paracoccus denitrificans (strain Pd 1222), this protein is Methionyl-tRNA formyltransferase.